We begin with the raw amino-acid sequence, 447 residues long: Probable alpha-galactosidase B (447 aa).

An N-terminal signal peptide occupies residues 1–25 (MTTFFSLTTAAAVLTLARGSNALVR). Cystine bridges form between Cys-45–Cys-77 and Cys-127–Cys-157. Asp-155 (nucleophile) is an active-site residue. N-linked (GlcNAc...) asparagine glycosylation is found at Asn-162 and Asn-180. 225 to 229 (EWGQA) serves as a coordination point for substrate. Asn-236 is a glycosylation site (N-linked (GlcNAc...) asparagine). The active-site Proton donor is Asp-247. A glycan (N-linked (GlcNAc...) asparagine) is linked at Asn-286.

This sequence belongs to the glycosyl hydrolase 27 family.

It is found in the secreted. The enzyme catalyses Hydrolysis of terminal, non-reducing alpha-D-galactose residues in alpha-D-galactosides, including galactose oligosaccharides, galactomannans and galactolipids.. Hydrolyzes a variety of simple alpha-D-galactoside as well as more complex molecules such as oligosaccharides and polysaccharides. This is Probable alpha-galactosidase B (aglB) from Aspergillus fumigatus (strain ATCC MYA-4609 / CBS 101355 / FGSC A1100 / Af293) (Neosartorya fumigata).